A 306-amino-acid chain; its full sequence is Elongation factor Ts (306 aa).

The involved in Mg(2+) ion dislocation from EF-Tu stretch occupies residues 80 to 83; the sequence is TDFV.

This sequence belongs to the EF-Ts family.

It localises to the cytoplasm. Associates with the EF-Tu.GDP complex and induces the exchange of GDP to GTP. It remains bound to the aminoacyl-tRNA.EF-Tu.GTP complex up to the GTP hydrolysis stage on the ribosome. In Clostridium kluyveri (strain NBRC 12016), this protein is Elongation factor Ts.